Here is a 159-residue protein sequence, read N- to C-terminus: Large ribosomal subunit protein uL22 (159 aa).

The protein belongs to the universal ribosomal protein uL22 family. As to quaternary structure, part of the 50S ribosomal subunit.

Functionally, this protein binds specifically to 23S rRNA. It makes multiple contacts with different domains of the 23S rRNA in the assembled 50S subunit and ribosome. In terms of biological role, the globular domain of the protein is located near the polypeptide exit tunnel on the outside of the subunit, while an extended beta-hairpin is found that lines the wall of the exit tunnel in the center of the 70S ribosome. This chain is Large ribosomal subunit protein uL22, found in Methanopyrus kandleri (strain AV19 / DSM 6324 / JCM 9639 / NBRC 100938).